Consider the following 888-residue polypeptide: Serine/threonine-protein phosphatase 1 regulatory subunit 10 (888 aa).

Residues 1–348 (MGSGPIDPKE…EPAPPAEPMD (348 aa)) are interaction with TOX4. The region spanning 73 to 147 (KLLNNWLTYS…SDWMAVIRSQ (75 aa)) is the TFIIS N-terminal domain. 4 disordered regions span residues 147–213 (QSST…STGL), 247–270 (SATA…NTAP), 306–400 (KKKK…KTVT), and 534–853 (VETL…HGGD). Basic and acidic residues-rich tracts occupy residues 153 to 166 (AEKD…EGKS) and 174 to 196 (PLTE…EKPK). Residue Lys179 forms a Glycyl lysine isopeptide (Lys-Gly) (interchain with G-Cter in SUMO2) linkage. Positions 248–258 (ATAAPGDAAPP) are enriched in low complexity. A Glycyl lysine isopeptide (Lys-Gly) (interchain with G-Cter in SUMO2) cross-link involves residue Lys262. Position 313 is a phosphoserine (Ser313). Positions 325–334 (KTSTEQSTAK) are enriched in polar residues. Phosphoserine is present on Ser382. A necessary for interaction with PPP1CA region spans residues 388-417 (QLTRKGRKRKTVTWPEEGKLREYFYFELDE). The interval 393-408 (GRKRKTVTWPEEGKLR) is necessary for interaction with PPP1CC. The PP1-binding motif signature appears at 394–423 (RKRKTVTWPEEGKLREYFYFELDETERVNV). At Thr398 the chain carries Phosphothreonine. Residues 418–619 (TERVNVNKIK…LKQMLVPHGL (202 aa)) form an interaction with WDR82 region. Over residues 540-551 (GGSGGSPDGAGG) the composition is skewed to gly residues. Residues Ser545 and Ser591 each carry the phosphoserine modification. Residues 583–595 (EILTSIMGSPNSH) are compositionally biased toward polar residues. A compositionally biased stretch (basic and acidic residues) spans 596-611 (PSEELLKQPDYSDKLK). A compositionally biased stretch (pro residues) spans 644–655 (PPGPGGPMPGPH). Omega-N-methylarginine is present on Arg665. The segment covering 674–690 (RGGDPFWDGPGDPMRGG) has biased composition (low complexity). Omega-N-methylarginine is present on residues Arg693 and Arg737. 2 stretches are compositionally biased toward gly residues: residues 724 to 762 (ARGG…GSMG) and 784 to 794 (GPGGNMGGSGG). Over residues 811-851 (PHDVPSHRGHDHRGPPPHEHRGHDGHGGGGHRGHDGGHSHG) the composition is skewed to basic and acidic residues. Residues 854 to 882 (MSNRPVCRHFMMKGNCRYENNCAFYHPGV) form a C3H1-type zinc finger.

As to quaternary structure, component of the PNUTS-PP1 complex (also named PTW/PP1 complex), composed of PPP1R10/PNUTS, TOX4, WDR82, and PPP1CA (or PPP1CB or PPP1CC). In terms of processing, phosphorylated on Ser-398 by PKA within the region necessary for interaction with PPP1CA.

It localises to the nucleus. Its subcellular location is the chromosome. Substrate-recognition component of the PNUTS-PP1 protein phosphatase complex, a protein phosphatase 1 (PP1) complex that promotes RNA polymerase II transcription pause-release, allowing transcription elongation. Promoter-proximal pausing by RNA polymerase II is a transcription halt following transcription initiation but prior to elongation, which acts as a checkpoint to control that transcripts are favorably configured for transcriptional elongation. The PNUTS-PP1 complex mediates the release of RNA polymerase II from promoter-proximal region of genes by catalyzing dephosphorylation of proteins involved in transcription, such as AFF4, CDK9, MEPCE, INTS12, NCBP1, POLR2M/GDOWN1 and SUPT6H. The PNUTS-PP1 complex also regulates RNA polymerase II transcription termination by mediating dephosphorylation of SUPT5H in termination zones downstream of poly(A) sites, thereby promoting deceleration of RNA polymerase II transcription. PNUTS-PP1 complex is also involved in the response to replication stress by mediating dephosphorylation of POLR2A at 'Ser-5' of the CTD, promoting RNA polymerase II degradation. The PNUTS-PP1 complex also plays a role in the control of chromatin structure and cell cycle progression during the transition from mitosis into interphase. PNUTS-PP1 complex mediates dephosphorylation of MYC, promoting MYC stability by preventing MYC ubiquitination by the SCF(FBXW7) complex. In addition to acts as a substrate-recognition component, PPP1R10/PNUTS also acts as a nuclear targeting subunit for the PNUTS-PP1 complex. In some context, PPP1R10/PNUTS also acts as an inhibitor of protein phosphatase 1 (PP1) activity by preventing access to substrates, such as RB. In Mus musculus (Mouse), this protein is Serine/threonine-protein phosphatase 1 regulatory subunit 10.